The sequence spans 119 residues: Microtubule nucleation factor SSNA1 (119 aa).

T2 bears the N-acetylthreonine mark. The important for localization to the centrosome stretch occupies residues 2–32; that stretch reads TQQGAALQNYNNELVKCIEELCQKREELCRQ. Residues 13-70 are a coiled coil; the sequence is NELVKCIEELCQKREELCRQIQEEEDEKQRLQNEVRQLTEKLARVNENLARKIASRNE.

It belongs to the SSNA1 family. Self-associates to form fibrils. Also forms dimers as well as monomers. Interacts with SPAST. As to expression, widely expressed.

It is found in the nucleus. The protein localises to the cytoplasm. Its subcellular location is the cytoskeleton. It localises to the microtubule organizing center. The protein resides in the centrosome. It is found in the centriole. The protein localises to the midbody. Its subcellular location is the flagellum basal body. It localises to the flagellum axoneme. The protein resides in the cell projection. It is found in the axon. Functionally, microtubule-binding protein which stabilizes dynamic microtubules by slowing growth and shrinkage at both plus and minus ends and serves as a sensor of microtubule damage, protecting microtubules from the microtubule-severing enzyme SPAST. Induces microtubule branching which is mediated by the formation of long SSNA1 fibrils which guide microtubule protofilaments to split apart from the mother microtubule and form daughter microtubules. Plays a role in axon outgrowth and branching. Required for cell division. The polypeptide is Microtubule nucleation factor SSNA1 (Homo sapiens (Human)).